The following is a 116-amino-acid chain: Large ribosomal subunit protein bL17 (116 aa).

Belongs to the bacterial ribosomal protein bL17 family. Part of the 50S ribosomal subunit. Contacts protein L32.

In Synechococcus sp. (strain RCC307), this protein is Large ribosomal subunit protein bL17.